The sequence spans 570 residues: MSYKMSRAAYANMFGPTVGDKVRLADTELFIEVERDFTTHGEEVKFGGGKVIRDGMGQSQVTREGGAVDTVITNALIVDHWGIVKADIGLKDGRISAIGKAGNPDTQAGVTIIVGPGTEVIAGEGKIVTAGGMDSHIHFICPQQIDEALMSGITCMLGGGTGPAHGTLATTCTPGPWHIARMIEAADAFPMNLAFAGKGNASLPGALVEMVLGGATSLKLHEDWGTTPAAIDCCLSVADEYDVQVMIHTDTLNESGFVEDTIAAIKGRTIHAYHTEGAGGGHAPDIIRICGQPNVIPSSTNPTRPYTVNTLAEHLDMLMVCHHLSPSIPEDIAFAESRIRKETIAAEDILHDIGAFSIISSDSQAMGRVGEVAIRTWQTADKMKRQRGRLKEESGGNDNFRVKRYIAKYTINPAIAHGLSHEIGSLETGKRADLVLWNPTFFGVKPDMVLLGGTIAAAPMGDPNASIPTPQPVHYRPMFGAYGKSRTNSSVTFVSQASLDAGLAGRLGVAKALVAVQNTRGGIGKASMVHNSLTPHIEVDPETYEVRANGELLTCEPASVLPMAQRYFLF.

Residues 131–570 (GGMDSHIHFI…LPMAQRYFLF (440 aa)) form the Urease domain. 3 residues coordinate Ni(2+): histidine 136, histidine 138, and lysine 219. The residue at position 219 (lysine 219) is an N6-carboxylysine. Histidine 221 lines the substrate pocket. Ni(2+)-binding residues include histidine 248 and histidine 274. The Proton donor role is filled by histidine 322. Aspartate 362 contacts Ni(2+).

Belongs to the metallo-dependent hydrolases superfamily. Urease alpha subunit family. As to quaternary structure, heterotrimer of UreA (gamma), UreB (beta) and UreC (alpha) subunits. Three heterotrimers associate to form the active enzyme. Requires Ni cation as cofactor. Carboxylation allows a single lysine to coordinate two nickel ions.

It is found in the cytoplasm. It carries out the reaction urea + 2 H2O + H(+) = hydrogencarbonate + 2 NH4(+). The protein operates within nitrogen metabolism; urea degradation; CO(2) and NH(3) from urea (urease route): step 1/1. The polypeptide is Urease subunit alpha (Sinorhizobium medicae (strain WSM419) (Ensifer medicae)).